Consider the following 474-residue polypeptide: Aromatic amino acid aminotransferase C56E4.03 (474 aa).

It belongs to the class-I pyridoxal-phosphate-dependent aminotransferase family. Pyridoxal 5'-phosphate is required as a cofactor.

The protein localises to the cytoplasm. The enzyme catalyses an aromatic L-alpha-amino acid + 2-oxoglutarate = an aromatic oxo-acid + L-glutamate. Functionally, has aromatic amino acid transaminase activity. The protein is Aromatic amino acid aminotransferase C56E4.03 of Schizosaccharomyces pombe (strain 972 / ATCC 24843) (Fission yeast).